The sequence spans 125 residues: HQRVTLNDGHSIPVLGFITYAPDEVIKPGEEMFPTDEHGKSIGVSNFNHKRVXNQVEXHPYLNQSKDIVLVAYSALGSSRDPWKQSPALIALRYQLQRGVVVLAKSFIEREIKVFGFQLSSEDMK.

NADP(+)-binding positions include 9 to 18 and 74 to 111; these read GHSIPVLGFI and SALG…IERE.

Belongs to the aldo/keto reductase family. As to quaternary structure, monomer. In terms of processing, the N-terminus is blocked.

Its subcellular location is the cytoplasm. The enzyme catalyses morphine + NAD(+) = morphinone + NADH + H(+). It catalyses the reaction morphine + NADP(+) = morphinone + NADPH + H(+). Its activity is regulated as follows. Strongly inhibited by sulfhydryl reagents and quercetin, but not by pyrazole, barbital and indomethacine. Its function is as follows. Catalyzes the dehydrogenation of morphine to morphinone. Uses both NAD and NADP, but the activity is much greater with NAD than with NADP. The sequence is that of Morphine 6-dehydrogenase from Oryctolagus cuniculus (Rabbit).